Here is a 114-residue protein sequence, read N- to C-terminus: Aspartate 1-decarboxylase (114 aa).

Serine 25 functions as the Schiff-base intermediate with substrate; via pyruvic acid in the catalytic mechanism. Serine 25 carries the pyruvic acid (Ser) modification. Substrate is bound at residue threonine 57. Catalysis depends on tyrosine 58, which acts as the Proton donor. 71 to 73 lines the substrate pocket; sequence GAA.

This sequence belongs to the PanD family. In terms of assembly, heterooctamer of four alpha and four beta subunits. Pyruvate serves as cofactor. Post-translationally, is synthesized initially as an inactive proenzyme, which is activated by self-cleavage at a specific serine bond to produce a beta-subunit with a hydroxyl group at its C-terminus and an alpha-subunit with a pyruvoyl group at its N-terminus.

The protein localises to the cytoplasm. It carries out the reaction L-aspartate + H(+) = beta-alanine + CO2. The protein operates within cofactor biosynthesis; (R)-pantothenate biosynthesis; beta-alanine from L-aspartate: step 1/1. Functionally, catalyzes the pyruvoyl-dependent decarboxylation of aspartate to produce beta-alanine. In Haloquadratum walsbyi (strain DSM 16790 / HBSQ001), this protein is Aspartate 1-decarboxylase.